Here is a 253-residue protein sequence, read N- to C-terminus: MSDTEEVEHGEEEYEEEEEVQEEEVHEPAPPPEEKPRIKLTAPKIPEGEKVDFDDIQKKRQNKDLIELQALIDSHFEARRKEEEELVALKERIEKRRAERAEQQRIRAEKEKERQARLAEEKARREEEDAKRKAEDDLKKKKALSSMGASYSSYLAKADQKRGKKQTARETKKKVLAERRKPLNIDHLNEDKLRDKAKELWDWLYQLQTEKYDFTEQIKRKKYEILTLRCRLQELSKFSKKAGAKGKVGGRWK.

Residues 1–25 (MSDTEEVEHGEEEYEEEEEVQEEEV) show a composition bias toward acidic residues. Disordered stretches follow at residues 1–58 (MSDT…DIQK) and 97–178 (RAER…VLAE). Ser2 is modified (N-acetylserine). Basic and acidic residues-rich tracts occupy residues 46–58 (PEGE…DIQK), 97–139 (RAER…DDLK), and 167–178 (TARETKKKVLAE).

This sequence belongs to the troponin T family.

Troponin T is the tropomyosin-binding subunit of troponin, the thin filament regulatory complex which confers calcium-sensitivity to striated muscle actomyosin ATPase activity. The protein is Troponin T, fast skeletal muscle isoforms (TNNT3) of Coturnix japonica (Japanese quail).